We begin with the raw amino-acid sequence, 178 residues long: MRDRWLKRAVGARHYRPWLTERGSLTRRLQQHSRQFAVQPLHLARKKPPLAEAQLLQVLPRQHTLQRDVILRCDGEAVVFAHSLLPQQAMRGTWRGLGRLGSHSLGSALFADPRMCRGALQYKKLSPQHFLYRLAVAHIPAMRGPIWARRSVFRLGRKAVLVSELFLPSVLKLPLINK.

Arg-67, Leu-105, and Glu-164 together coordinate substrate.

The protein belongs to the UbiC family.

The protein resides in the cytoplasm. It carries out the reaction chorismate = 4-hydroxybenzoate + pyruvate. The protein operates within cofactor biosynthesis; ubiquinone biosynthesis. Removes the pyruvyl group from chorismate, with concomitant aromatization of the ring, to provide 4-hydroxybenzoate (4HB) for the ubiquinone pathway. This chain is Probable chorismate pyruvate-lyase, found in Methylobacillus flagellatus (strain ATCC 51484 / DSM 6875 / VKM B-1610 / KT).